The following is a 411-amino-acid chain: Adherens junction-associated protein 1 (411 aa).

Residues 1-43 form the signal peptide; the sequence is MWIQQLLGLSSMSIRWPGRPLGSHAWILIAMFQLAVDLPACEA. Residues 44-282 are Extracellular-facing; sequence LGPGPEFWLL…GEASGLAVHQ (239 aa). 3 disordered regions span residues 89–108, 115–197, and 239–268; these read IHGQMQMPRARRAHRPRDQA, AGLA…SNTF, and SLDPRRRIPGGVSTTEPSTSPSNNGEVTQP. Positions 115–146 are enriched in low complexity; the sequence is AGLAKPPAAAKSSPSLASSSSSSSSAVAGGAP. The segment covering 166-178 has biased composition (polar residues); that stretch reads SFDSRGSRPTTET. A compositionally biased stretch (low complexity) spans 247 to 263; sequence PGGVSTTEPSTSPSNNG. A helical membrane pass occupies residues 283-303; sequence IITITVSLIMVIAALITTLVL. Positions 303–411 are targeting signals; the sequence is LKNCCAQSGN…VSEKWFEISC (109 aa). Residues 304-411 lie on the Cytoplasmic side of the membrane; the sequence is KNCCAQSGNT…VSEKWFEISC (108 aa). A disordered region spans residues 311–330; that stretch reads GNTRRNSHQRKTNQQEESCQ.

In terms of assembly, forms a complex with CDH1 and CTNNB1; interacts directly with CTNNB1. Interacts with AP1M2. Interacts with isoform 2 of BSG/CD147. In terms of processing, thr-237 and Ser-239 may be phosphorylated; however as this position is probably extracellular, the in vivo relevance is not proven. In terms of tissue distribution, expressed in uterus and pancreas (at protein level).

The protein resides in the basolateral cell membrane. The protein localises to the apical cell membrane. Its subcellular location is the cell junction. It is found in the adherens junction. Its function is as follows. Plays a role in cell adhesion and cell migration. This is Adherens junction-associated protein 1 (AJAP1) from Homo sapiens (Human).